The primary structure comprises 232 residues: Large ribosomal subunit protein uL1 (232 aa).

This sequence belongs to the universal ribosomal protein uL1 family. As to quaternary structure, part of the 50S ribosomal subunit.

Its function is as follows. Binds directly to 23S rRNA. The L1 stalk is quite mobile in the ribosome, and is involved in E site tRNA release. In terms of biological role, protein L1 is also a translational repressor protein, it controls the translation of the L11 operon by binding to its mRNA. The sequence is that of Large ribosomal subunit protein uL1 from Ruegeria sp. (strain TM1040) (Silicibacter sp.).